Here is a 215-residue protein sequence, read N- to C-terminus: Probable nicotinate-nucleotide adenylyltransferase (215 aa).

The protein belongs to the NadD family.

The catalysed reaction is nicotinate beta-D-ribonucleotide + ATP + H(+) = deamido-NAD(+) + diphosphate. Its pathway is cofactor biosynthesis; NAD(+) biosynthesis; deamido-NAD(+) from nicotinate D-ribonucleotide: step 1/1. Catalyzes the reversible adenylation of nicotinate mononucleotide (NaMN) to nicotinic acid adenine dinucleotide (NaAD). In Shewanella putrefaciens (strain CN-32 / ATCC BAA-453), this protein is Probable nicotinate-nucleotide adenylyltransferase.